A 414-amino-acid chain; its full sequence is Imidazolonepropionase (414 aa).

Over residues 1-20 (MSHQLFRNTRIYSPMDSGQP) the composition is skewed to polar residues. The tract at residues 1–26 (MSHQLFRNTRIYSPMDSGQPSAGKAQ) is disordered. Positions 81 and 83 each coordinate Fe(3+). Positions 81 and 83 each coordinate Zn(2+). The 4-imidazolone-5-propanoate site is built by Arg90, Tyr153, and His186. Tyr153 serves as a coordination point for N-formimidoyl-L-glutamate. His251 lines the Fe(3+) pocket. His251 contributes to the Zn(2+) binding site. A 4-imidazolone-5-propanoate-binding site is contributed by Glu254. Asp325 is a binding site for Fe(3+). Asp325 is a Zn(2+) binding site. Positions 327 and 329 each coordinate N-formimidoyl-L-glutamate. Ser330 provides a ligand contact to 4-imidazolone-5-propanoate.

It belongs to the metallo-dependent hydrolases superfamily. HutI family. Requires Zn(2+) as cofactor. It depends on Fe(3+) as a cofactor.

It is found in the cytoplasm. The catalysed reaction is 4-imidazolone-5-propanoate + H2O = N-formimidoyl-L-glutamate. Its pathway is amino-acid degradation; L-histidine degradation into L-glutamate; N-formimidoyl-L-glutamate from L-histidine: step 3/3. In terms of biological role, catalyzes the hydrolytic cleavage of the carbon-nitrogen bond in imidazolone-5-propanoate to yield N-formimidoyl-L-glutamate. It is the third step in the universal histidine degradation pathway. This chain is Imidazolonepropionase, found in Desulfotalea psychrophila (strain LSv54 / DSM 12343).